The chain runs to 408 residues: Transmembrane protein 237 (408 aa).

Positions 1–14 are enriched in basic and acidic residues; it reads MRTDSGARLEEGHL. The segment at 1–137 is disordered; sequence MRTDSGARLE…RRKTKKTQPA (137 aa). 2 positions are modified to phosphoserine: S25 and S49. The segment covering 60–77 has biased composition (basic and acidic residues); that stretch reads RPSEGNEPSTKELKEHPE. The segment covering 95–106 has biased composition (low complexity); that stretch reads TSSTQKKSSSSS. 4 consecutive transmembrane segments (helical) span residues 227–247, 268–288, 303–323, and 358–378; these read MIGLFSHGFLAGCAVWNIVVI, LAYPFQSLLYLLLALSTISAF, FLALDPTALASFLYFTALILS, and WIVVNLVVALLVGLSWLFLSY.

Belongs to the TMEM237 family. As to quaternary structure, part of the tectonic-like complex (also named B9 complex). Interacts with TMEM107.

Its subcellular location is the membrane. It is found in the cell projection. It localises to the cilium. Its function is as follows. Component of the transition zone in primary cilia. Required for ciliogenesis. This is Transmembrane protein 237 (TMEM237) from Homo sapiens (Human).